Here is a 287-residue protein sequence, read N- to C-terminus: uncharacterized protein (287 aa).

In terms of domain architecture, THUMP spans Cys133 to Gln239. The interval Glu257–Glu287 is disordered. The segment covering Ser266–Glu287 has biased composition (basic and acidic residues).

This is an uncharacterized protein from Schizosaccharomyces pombe (strain 972 / ATCC 24843) (Fission yeast).